A 351-amino-acid chain; its full sequence is RISC-loading complex subunit tarbp2 (351 aa).

The disordered stretch occupies residues Met-1–Leu-22. DRBM domains lie at Thr-29–Glu-96 and Asn-150–Gln-218. Residues Ala-221–Gly-243 form a disordered region. The region spanning Gly-278–Ile-346 is the DRBM 3 domain.

This sequence belongs to the TARBP2 family. Self-associates. Component of the RISC loading complex (RLC), or micro-RNA (miRNA) loading complex (miRLC), which is composed of dicer1, ago2 and tarbp2. Note that the trimeric RLC/miRLC is also referred to as RISC.

It localises to the cytoplasm. In terms of biological role, required for formation of the RNA induced silencing complex (RISC). Component of the RISC loading complex (RLC), also known as the micro-RNA (miRNA) loading complex (miRLC), which is composed of dicer1, ago2 and tarbp2. Within the RLC/miRLC, dicer1 and tarbp2 are required to process precursor miRNAs (pre-miRNAs) to mature miRNAs and then load them onto ago2. ago2 bound to the mature miRNA constitutes the minimal RISC and may subsequently dissociate from dicer1 and tarbp2. May also play a role in the production of short interfering RNAs (siRNAs) from double-stranded RNA (dsRNA) by dicer1. In Xenopus laevis (African clawed frog), this protein is RISC-loading complex subunit tarbp2 (tarbp2).